An 873-amino-acid chain; its full sequence is Sine oculis-binding protein homolog (873 aa).

Residues 1 to 14 (MAEMEKEGRPPENK) show a composition bias toward basic and acidic residues. The segment at 1-26 (MAEMEKEGRPPENKRSRKPAHPVKRE) is disordered. 2 FCS-type zinc fingers span residues 142–180 (DDVS…KCFA) and 216–256 (FKNN…KCLN). Disordered stretches follow at residues 308–339 (RRKA…DTAN), 413–484 (RGPP…PGAP), and 550–646 (KPPN…PGVL). Residues 318-339 (AGQSQGPGPSASTTVSPSDTAN) show a composition bias toward polar residues. The segment covering 417-433 (HHASNPNSPLSNPMLPG) has biased composition (low complexity). The span at 460 to 484 (IHPPSTPTMPGNPPGLLPPPPPGAP) shows a compositional bias: pro residues. Residues 614–625 (EHGRSEVVDLTR) show a composition bias toward basic and acidic residues. An SUMO interaction motif 1 (SIM); mediates the binding to polysumoylated substrates motif is present at residues 620-624 (VVDLT). The residue at position 629 (Ser-629) is a Phosphoserine. Residues 653–657 (VIDLT) carry the SUMO interaction motif 2 (SIM); mediates the binding to polysumoylated substrates motif. Residue Lys-677 forms a Glycyl lysine isopeptide (Lys-Gly) (interchain with G-Cter in SUMO2) linkage. Ser-699 is modified (phosphoserine). Positions 730 to 771 (AAAEGAKSAEPPPEQPPPPPPPAPPKKLLSPEEPAVSELESV) are disordered. Over residues 739 to 754 (EPPPEQPPPPPPPAPP) the composition is skewed to pro residues.

Belongs to the SOBP family. As to quaternary structure, interacts (via SIM domains) with SUMO1 and SUMO2.

Its function is as follows. Implicated in development of the cochlea. This Homo sapiens (Human) protein is Sine oculis-binding protein homolog.